We begin with the raw amino-acid sequence, 171 residues long: MDYFTLFGLPARYQLDTQALSLRFQDLQRQYHPDKFASGSQAEQLAAVQQSATINQAWQTLRHPLMRAEYLLSLHGFDLACEQHTVRDTAFLMEQLELREELDEIEQAKDEARLESFIKRVKKMFDTRHQLMVEQLDNETWDAAADTVRKLRFLDKLRSSAEQLEEKLLDF.

Residues 2–74 form the J domain; it reads DYFTLFGLPA…LMRAEYLLSL (73 aa).

Belongs to the HscB family. Interacts with HscA and stimulates its ATPase activity. Interacts with IscU.

Co-chaperone involved in the maturation of iron-sulfur cluster-containing proteins. Seems to help targeting proteins to be folded toward HscA. The protein is Co-chaperone protein HscB of Escherichia coli (strain SMS-3-5 / SECEC).